The primary structure comprises 566 residues: Macrophage colony-stimulating factor 1 (566 aa).

The signal sequence occupies residues 1-32 (MTARGAAGRCPSSTWMGSRLLLVCLLVSRSVA). Topologically, residues 33-508 (EVSEHCSHMI…SSIQDPQTSA (476 aa)) are extracellular. N-linked (GlcNAc...) asparagine glycans are attached at residues Asn106, Asn153, and Asn171. Disordered stretches follow at residues 197 to 417 (PSSD…KLLP) and 434 to 484 (GKKS…GAAR). The span at 253–265 (PRSTCQTLESTEQ) shows a compositional bias: polar residues. Residue Ser302 is glycosylated (O-linked (Xyl...) (chondroitin sulfate) serine). Over residues 348-360 (DQQPTNITDTPLT) the composition is skewed to polar residues. The N-linked (GlcNAc...) asparagine glycan is linked to Asn353. 2 O-linked (GalNAc...) threonine glycosylation sites follow: Thr355 and Thr357. Residues 377–394 (EKTDGSSTLREDQQEPRS) show a composition bias toward basic and acidic residues. Residues 400–410 (LNPQRVGNSAT) are compositionally biased toward polar residues. Over residues 434 to 445 (GKKSTRDRRSPA) the composition is skewed to basic and acidic residues. The chain crosses the membrane as a helical span at residues 509–531 (FVFWVLGIILVLLAVGGLLFYSW). Residues 532–566 (KRRSHRDPRTLDSSVGRPEGSSLAQDEDRQVELPV) are Cytoplasmic-facing. The segment at 538–566 (DPRTLDSSVGRPEGSSLAQDEDRQVELPV) is disordered. A compositionally biased stretch (basic and acidic residues) spans 557-566 (DEDRQVELPV).

As to quaternary structure, homodimer or heterodimer; disulfide-linked. Likely to exist in multiple forms: homodimer consisting of 2 identical 150-200 kDa proteoglycan subunits, heterodimer consisting of a 150-200 kDa proteoglycan subunit and a truncated 43 kDa subunit, and a homodimer consisting of 2 identical 43 kDa subunits. Interacts with CSF1R. In terms of processing, N-glycosylated. Post-translationally, O-glycosylated; contains chondroitin sulfate.

It is found in the cell membrane. It localises to the secreted. The protein resides in the extracellular space. Functionally, cytokine that plays an essential role in the regulation of survival, proliferation and differentiation of hematopoietic precursor cells, especially mononuclear phagocytes, such as macrophages and monocytes. Promotes the release of pro-inflammatory chemokines, and thereby plays an important role in innate immunity and in inflammatory processes. Plays an important role in the regulation of osteoclast proliferation and differentiation, the regulation of bone resorption, and is required for normal bone development. Required for normal male and female fertility. Promotes reorganization of the actin cytoskeleton, regulates formation of membrane ruffles, cell adhesion and cell migration. Plays a role in lipoprotein clearance. The protein is Macrophage colony-stimulating factor 1 (Csf1) of Rattus norvegicus (Rat).